A 916-amino-acid polypeptide reads, in one-letter code: Protein O-GlcNAcase (916 aa).

The segment at 1-50 (MVQKESQAALEERESERNANPASVSGASLEPSAAPAPGEDNPSGAGAAAG) is disordered. One can recognise a GH84 domain in the interval 60 to 336 (FLCGVVEGFY…TLATWYKSNM (277 aa)). Gly67, Lys98, and Asp174 together coordinate a protein. Asp175 functions as the Proton donor in the catalytic mechanism. A protein is bound by residues Tyr219, 278–280 (WDN), Asp285, and Asn313. Ser364 carries the post-translational modification Phosphoserine. Positions 440 to 480 (QGAALSGEPSALTKEEEKKQPDEEPMDMVVEKQEESEHKSD) are disordered. 2 stretches are compositionally biased toward basic and acidic residues: residues 452–461 (TKEEEKKQPD) and 468–480 (VVEK…HKSD).

It belongs to the glycosyl hydrolase 84 family. In terms of assembly, monomer. Interacts with CLOCK. In terms of processing, proteolytically cleaved by caspase-3 during apoptosis. The fragments interact with each other; cleavage does not decrease enzyme activity. In terms of tissue distribution, detected in spleen (at protein level). Ubiquitous. Expressed at highest levels in the brain and spleen.

The protein resides in the nucleus. Its subcellular location is the cytoplasm. It catalyses the reaction 3-O-(N-acetyl-beta-D-glucosaminyl)-L-seryl-[protein] + H2O = N-acetyl-D-glucosamine + L-seryl-[protein]. The catalysed reaction is 3-O-(N-acetyl-beta-D-glucosaminyl)-L-threonyl-[protein] + H2O = L-threonyl-[protein] + N-acetyl-D-glucosamine. Inhibited by Cu(2+), Hg(2+), Cd(2+) and Zn(2+) at 1 mM. Not inhibited by Co(2+), Mg(2+), Ca(2+), Mn(2+), Fe(3+) and EDTA. Also inhibited by sodium chloride at 1M and 2-amino-2-hydroxymethyl-1,3-propanediol (trishydroxymethylaminomethane) at 75 mM. Cleaves GlcNAc but not GalNAc from O-glycosylated proteins. Deglycosylates a large and diverse number of proteins, such as CRYAB, ELK1, GSDMD, LMNB1 and TAB1. Can use p-nitrophenyl-beta-GlcNAc and 4-methylumbelliferone-GlcNAc as substrates but not p-nitrophenyl-beta-GalNAc or p-nitrophenyl-alpha-GlcNAc (in vitro). Does not bind acetyl-CoA and does not have histone acetyltransferase activity. Its function is as follows. Lacks enzyme activity. The protein is Protein O-GlcNAcase of Rattus norvegicus (Rat).